Here is a 386-residue protein sequence, read N- to C-terminus: N-terminal EF-hand calcium-binding protein 2 (386 aa).

The residue at position 10 (R10) is an Omega-N-methylarginine. Asymmetric dimethylarginine is present on R42. 2 EF-hand domains span residues 60–95 (GGTA…GVLN) and 96–129 (EKEL…HMGD). Residues D73, N75, D77, K79, E84, D107, D109, T111, H113, and E118 each contribute to the Ca(2+) site. A coiled-coil region spans residues 170–201 (LKETANQIQSLLSSVESAVEAIEEQTSQLRQN). In terms of domain architecture, ABM spans 286 to 375 (QLVRQEMAVC…SQPEALSRIL (90 aa)).

In terms of assembly, interacts (calcium-dependent) with ADORA2A and GRM5. As to expression, expressed in brain. Expressed in the spinal dorsal horn with especially strong expression in lamina IIi; found in excitory synaptic boutons and in ependymal cells (at protein level).

It is found in the cytoplasm. Its subcellular location is the cell projection. It localises to the dendrite. The protein localises to the axon. The protein resides in the cell membrane. May act as a signaling scaffold protein that senses intracellular calcium. Can modulate ligand-induced internalization of ADORA2A and coupling efficiency of mGluR5/GRM5; for both receptors may regulate signaling activity such as promoting MAPK1/3 (ERK1/2) activation. The chain is N-terminal EF-hand calcium-binding protein 2 (NECAB2) from Homo sapiens (Human).